Consider the following 166-residue polypeptide: Large ribosomal subunit protein uL11 (166 aa).

This sequence belongs to the universal ribosomal protein uL11 family. As to quaternary structure, part of the ribosomal stalk of the 50S ribosomal subunit. Interacts with L10 and the large rRNA to form the base of the stalk. L10 forms an elongated spine to which L12 dimers bind in a sequential fashion forming a multimeric L10(L12)X complex.

Forms part of the ribosomal stalk which helps the ribosome interact with GTP-bound translation factors. This chain is Large ribosomal subunit protein uL11, found in Methanopyrus kandleri (strain AV19 / DSM 6324 / JCM 9639 / NBRC 100938).